A 191-amino-acid chain; its full sequence is Elongation factor P (191 aa).

The residue at position 34 (Lys34) is an N6-(3,6-diaminohexanoyl)-5-hydroxylysine.

This sequence belongs to the elongation factor P family. May be beta-lysylated on the epsilon-amino group of Lys-34 by the combined action of EpmA and EpmB, and then hydroxylated on the C5 position of the same residue by EpmC (if this protein is present). Lysylation is critical for the stimulatory effect of EF-P on peptide-bond formation. The lysylation moiety may extend toward the peptidyltransferase center and stabilize the terminal 3-CCA end of the tRNA. Hydroxylation of the C5 position on Lys-34 may allow additional potential stabilizing hydrogen-bond interactions with the P-tRNA.

Its subcellular location is the cytoplasm. It participates in protein biosynthesis; polypeptide chain elongation. Involved in peptide bond synthesis. Alleviates ribosome stalling that occurs when 3 or more consecutive Pro residues or the sequence PPG is present in a protein, possibly by augmenting the peptidyl transferase activity of the ribosome. Modification of Lys-34 is required for alleviation. This chain is Elongation factor P, found in Colwellia psychrerythraea (strain 34H / ATCC BAA-681) (Vibrio psychroerythus).